The chain runs to 442 residues: Inhibitor of Apoptosis OPG037 (442 aa).

6 ANK repeats span residues 67–96, 100–131, 203–233, 237–267, 292–321, and 323–347; these read DGNYPLHIASKINNNRIVAMLLVHGADPNA, HNKTPLYYLSGTDDEVIERINLLVQYGAKINN, DGNTPLHIVCSKTVKYVDIINLLLPSTDVNK, FGDSPLTLLIKTLSPAHLINKLISTSNVITD, YDSTDFKMAVEVGSIRCVKYLLDNDIICED, and MYYAVLSEYETMVDYLLFNHFSVDS.

This sequence belongs to the orthopoxvirus OPG037 family. As to quaternary structure, may interact with host caspase-9-Apaf-1 complex.

The protein resides in the host cytoplasm. Its function is as follows. Inhibits host apoptosis. Acts by associating with host apoptosome. This is Inhibitor of Apoptosis OPG037 (OPG037) from Monkeypox virus.